Reading from the N-terminus, the 132-residue chain is ATP synthase epsilon chain (132 aa).

It belongs to the ATPase epsilon chain family. In terms of assembly, F-type ATPases have 2 components, CF(1) - the catalytic core - and CF(0) - the membrane proton channel. CF(1) has five subunits: alpha(3), beta(3), gamma(1), delta(1), epsilon(1). CF(0) has three main subunits: a, b and c.

It localises to the cell inner membrane. Functionally, produces ATP from ADP in the presence of a proton gradient across the membrane. This Cereibacter sphaeroides (strain ATCC 17025 / ATH 2.4.3) (Rhodobacter sphaeroides) protein is ATP synthase epsilon chain.